The following is a 76-amino-acid chain: Small ribosomal subunit protein bS18 (76 aa).

It belongs to the bacterial ribosomal protein bS18 family. In terms of assembly, part of the 30S ribosomal subunit. Forms a tight heterodimer with protein bS6.

Its function is as follows. Binds as a heterodimer with protein bS6 to the central domain of the 16S rRNA, where it helps stabilize the platform of the 30S subunit. This chain is Small ribosomal subunit protein bS18, found in Nitrosomonas eutropha (strain DSM 101675 / C91 / Nm57).